The following is a 288-amino-acid chain: Sulfur carrier protein FdhD (288 aa).

The Cysteine persulfide intermediate role is filled by C122. 268–273 lines the Mo-bis(molybdopterin guanine dinucleotide) pocket; it reads FVRGER.

The protein belongs to the FdhD family.

Its subcellular location is the cytoplasm. Its function is as follows. Required for formate dehydrogenase (FDH) activity. Acts as a sulfur carrier protein that transfers sulfur from IscS to the molybdenum cofactor prior to its insertion into FDH. In Anaeromyxobacter dehalogenans (strain 2CP-1 / ATCC BAA-258), this protein is Sulfur carrier protein FdhD.